The sequence spans 371 residues: 4-hydroxy-3-methylbut-2-en-1-yl diphosphate synthase (flavodoxin) (371 aa).

[4Fe-4S] cluster contacts are provided by cysteine 270, cysteine 273, cysteine 305, and glutamate 312.

It belongs to the IspG family. Requires [4Fe-4S] cluster as cofactor.

The catalysed reaction is (2E)-4-hydroxy-3-methylbut-2-enyl diphosphate + oxidized [flavodoxin] + H2O + 2 H(+) = 2-C-methyl-D-erythritol 2,4-cyclic diphosphate + reduced [flavodoxin]. It functions in the pathway isoprenoid biosynthesis; isopentenyl diphosphate biosynthesis via DXP pathway; isopentenyl diphosphate from 1-deoxy-D-xylulose 5-phosphate: step 5/6. Functionally, converts 2C-methyl-D-erythritol 2,4-cyclodiphosphate (ME-2,4cPP) into 1-hydroxy-2-methyl-2-(E)-butenyl 4-diphosphate. This chain is 4-hydroxy-3-methylbut-2-en-1-yl diphosphate synthase (flavodoxin), found in Shewanella piezotolerans (strain WP3 / JCM 13877).